The primary structure comprises 222 residues: Triosephosphate isomerase (222 aa).

9 to 11 (NYK) is a binding site for substrate. Catalysis depends on histidine 93, which acts as the Electrophile. The active-site Proton acceptor is the glutamate 141. Substrate contacts are provided by residues isoleucine 146, glycine 181, and 202–203 (AS).

Belongs to the triosephosphate isomerase family. Homotetramer; dimer of dimers.

The protein resides in the cytoplasm. The catalysed reaction is D-glyceraldehyde 3-phosphate = dihydroxyacetone phosphate. It functions in the pathway carbohydrate biosynthesis; gluconeogenesis. It participates in carbohydrate degradation; glycolysis; D-glyceraldehyde 3-phosphate from glycerone phosphate: step 1/1. In terms of biological role, involved in the gluconeogenesis. Catalyzes stereospecifically the conversion of dihydroxyacetone phosphate (DHAP) to D-glyceraldehyde-3-phosphate (G3P). The protein is Triosephosphate isomerase of Methanobrevibacter smithii (strain ATCC 35061 / DSM 861 / OCM 144 / PS).